The sequence spans 389 residues: bZIP transcription factor 68 (389 aa).

A compositionally biased stretch (basic and acidic residues) spans 1–16 (MGSSEMEKSGKEKEPK). Disordered regions lie at residues 1–42 (MGSS…VSAG), 124–154 (MAEA…KRSK), 170–236 (AGKN…NLPV), 285–318 (QPWL…RKQA), and 356–389 (SSLK…QDVA). The span at 19–32 (PPSTSSSAPATVVS) shows a compositional bias: low complexity. Residues 137–149 (GDGKPSDGKEKLP) are compositionally biased toward basic and acidic residues. A Glycyl lysine isopeptide (Lys-Gly) (interchain with G-Cter in ubiquitin) cross-link involves residue Lys-154. The segment covering 170–205 (AGKNSGASANGACSKSAESGSDGSSDGSDANSQNDS) has biased composition (low complexity). Composition is skewed to basic and acidic residues over residues 206-215 (GSRHNGKDGE) and 304-318 (SNRE…RKQA). The bZIP domain occupies 295 to 358 (EIKRQRRKQS…EELLAENSSL (64 aa)). The segment at 297–316 (KRQRRKQSNRESARRSRLRK) is basic motif. Positions 323–358 (LAQRAEVLNGENSSLRAEINKLKSQYEELLAENSSL) are leucine-zipper. Positions 356-366 (SSLKNKFSSAP) are enriched in polar residues. Residues 372–389 (DLDKNEQEPQRSTRQDVA) show a composition bias toward basic and acidic residues.

This sequence belongs to the bZIP family. As to quaternary structure, monomer, homodimer and heterodimers with GBF1/BZIP41, GBF2/BZIP54 and GBF3/BZIP55. Heterodimers with BZIP16. Interacts with GIP1.

It localises to the nucleus. Its function is as follows. Transcriptional activator that binds to the G-box motif (5'-CACGTG-3') and other cis-acting elements with 5'-ACGT-3' core, such as Hex, C-box and as-1 motifs. Possesses high binding affinity to G-box, much lower affinity to Hex and C-box, and little affinity to as-1 element. G-box and G-box-like motifs are cis-acting elements defined in promoters of certain plant genes which are regulated by such diverse stimuli as light-induction or hormone control. Binds to the G-box motif 5'-CACGTG-3' of LHCB2.4 (At3g27690) promoter. May act as transcriptional activator in light-regulated expression of LHCB2.4. Probably binds DNA as monomer. DNA-binding activity is redox-dependent. The sequence is that of bZIP transcription factor 68 from Arabidopsis thaliana (Mouse-ear cress).